The following is a 430-amino-acid chain: Adenylosuccinate synthetase (430 aa).

GTP is bound by residues 12 to 18 (GDEGKGK) and 40 to 42 (GHT). Asp-13 serves as the catalytic Proton acceptor. Mg(2+)-binding residues include Asp-13 and Gly-40. IMP is bound by residues 13-16 (DEGK), 38-41 (NAGH), Thr-128, Arg-142, Gln-223, Thr-238, and Arg-302. The active-site Proton donor is His-41. 298–304 (TTTGRPR) provides a ligand contact to substrate. GTP is bound by residues Arg-304, 330–332 (LLD), and 412–414 (SVG).

The protein belongs to the adenylosuccinate synthetase family. Homodimer. It depends on Mg(2+) as a cofactor.

It localises to the cytoplasm. The catalysed reaction is IMP + L-aspartate + GTP = N(6)-(1,2-dicarboxyethyl)-AMP + GDP + phosphate + 2 H(+). Its pathway is purine metabolism; AMP biosynthesis via de novo pathway; AMP from IMP: step 1/2. Its function is as follows. Plays an important role in the de novo pathway of purine nucleotide biosynthesis. Catalyzes the first committed step in the biosynthesis of AMP from IMP. This chain is Adenylosuccinate synthetase, found in Listeria monocytogenes serotype 4a (strain HCC23).